The sequence spans 218 residues: MNSVTISHAPYTITYHDDWEPVMSQLVEFYNEVASWLLRDETSPIPDKFFIQLKQPLRNKRVCVCGIDPYPKDGTGVPFESPNFTKKSIKEIASSISRLTGVIDYKGYNLNIIDGVIPWNYYLSCKLGETKSHAIYWDKISKLLLQHITKHVSVLYCLGKTDFSNIRAKLESPVTTIVGYHPAARDHQFEKDRSFEIINVLLELDNKTPINWAQGFIY.

Belongs to the uracil-DNA glycosylase (UDG) superfamily. UNG family. As to quaternary structure, homodimer. Interacts with protein OPG148. Component of the Uracil-DNA glycosylase(UDG)-OPG148-polymerase complex; OPG148 and UDG form a heterodimeric processivity factor that associates with OPG71 to form the processive polymerase holoenzyme.

It catalyses the reaction Hydrolyzes single-stranded DNA or mismatched double-stranded DNA and polynucleotides, releasing free uracil.. Its function is as follows. Plays an essential role in viral replication as a component of the DNA polymerase processivity factor. Excises uracil residues from the DNA which can arise as a result of misincorporation of dUMP residues by DNA polymerase or due to deamination of cytosine. The polypeptide is Uracil-DNA glycosylase (OPG116) (Monkeypox virus).